A 211-amino-acid chain; its full sequence is Thiamine-phosphate synthase (211 aa).

4-amino-2-methyl-5-(diphosphooxymethyl)pyrimidine is bound by residues Gln37 to Lys41 and Asn69. Residues Asp70 and Asp89 each contribute to the Mg(2+) site. Ser108 lines the 4-amino-2-methyl-5-(diphosphooxymethyl)pyrimidine pocket. Thr134 to Thr136 lines the 2-[(2R,5Z)-2-carboxy-4-methylthiazol-5(2H)-ylidene]ethyl phosphate pocket. Lys137 serves as a coordination point for 4-amino-2-methyl-5-(diphosphooxymethyl)pyrimidine. 2-[(2R,5Z)-2-carboxy-4-methylthiazol-5(2H)-ylidene]ethyl phosphate is bound by residues Gly166 and Val186 to Ser187.

Belongs to the thiamine-phosphate synthase family. The cofactor is Mg(2+).

The catalysed reaction is 2-[(2R,5Z)-2-carboxy-4-methylthiazol-5(2H)-ylidene]ethyl phosphate + 4-amino-2-methyl-5-(diphosphooxymethyl)pyrimidine + 2 H(+) = thiamine phosphate + CO2 + diphosphate. It catalyses the reaction 2-(2-carboxy-4-methylthiazol-5-yl)ethyl phosphate + 4-amino-2-methyl-5-(diphosphooxymethyl)pyrimidine + 2 H(+) = thiamine phosphate + CO2 + diphosphate. It carries out the reaction 4-methyl-5-(2-phosphooxyethyl)-thiazole + 4-amino-2-methyl-5-(diphosphooxymethyl)pyrimidine + H(+) = thiamine phosphate + diphosphate. The protein operates within cofactor biosynthesis; thiamine diphosphate biosynthesis; thiamine phosphate from 4-amino-2-methyl-5-diphosphomethylpyrimidine and 4-methyl-5-(2-phosphoethyl)-thiazole: step 1/1. Condenses 4-methyl-5-(beta-hydroxyethyl)thiazole monophosphate (THZ-P) and 2-methyl-4-amino-5-hydroxymethyl pyrimidine pyrophosphate (HMP-PP) to form thiamine monophosphate (TMP). The sequence is that of Thiamine-phosphate synthase from Klebsiella pneumoniae subsp. pneumoniae (strain ATCC 700721 / MGH 78578).